The primary structure comprises 331 residues: D-alanine--D-alanine ligase (331 aa).

Positions 122–328 constitute an ATP-grasp domain; the sequence is KLWYDAIGIP…FHEFLADCIE (207 aa). Residue 152–207 participates in ATP binding; the sequence is AFDKWGKLFVKAARQGSSVGCYSVTKIEQLSDAIDKAFGFSHQVLVEKAVKPRELE. Positions 282, 295, and 297 each coordinate Mg(2+).

Belongs to the D-alanine--D-alanine ligase family. Mg(2+) is required as a cofactor. Mn(2+) serves as cofactor.

The protein resides in the cytoplasm. The catalysed reaction is 2 D-alanine + ATP = D-alanyl-D-alanine + ADP + phosphate + H(+). Its pathway is cell wall biogenesis; peptidoglycan biosynthesis. Cell wall formation. This Vibrio vulnificus (strain CMCP6) protein is D-alanine--D-alanine ligase.